The following is a 352-amino-acid chain: Cysteinyl leukotriene receptor 1 (352 aa).

The Extracellular portion of the chain corresponds to 1 to 43 (MYLQGTKQTFLENMNGTENLTTSLINNTCHDTIDEFRNQVYST). N-linked (GlcNAc...) asparagine glycosylation is found at asparagine 15, asparagine 19, and asparagine 26. Residues 44–64 (MYSVISVVGFFGNSFVLYVLI) form a helical membrane-spanning segment. Topologically, residues 65 to 72 (KTYHEKSA) are cytoplasmic. A helical membrane pass occupies residues 73–93 (FQVYMINLAIADLLCVCTLPL). Topologically, residues 94–121 (RVVYYVHKGKWLFGDFLCRLTTYALYVN) are extracellular. Cysteine 111 and cysteine 188 are joined by a disulfide. A helical membrane pass occupies residues 122–142 (LYCSIFFMTAMSFFRCVAIVF). Topologically, residues 143-156 (PVQNINLVTQKKAR) are cytoplasmic. The chain crosses the membrane as a helical span at residues 157-177 (FVCIGIWIFVILTSSPFLMYK). Over 178–208 (SYQDEKNNTKCFEPPQNNQAKKYVLILHYVS) the chain is Extracellular. N-linked (GlcNAc...) asparagine glycosylation occurs at asparagine 184. Residues 209 to 229 (LFFGFIIPFVTIIVCYTMIIL) traverse the membrane as a helical segment. The Cytoplasmic portion of the chain corresponds to 230–245 (TLLKNTMKKNMPSRRK). Residues 246-266 (AIGMIIVVTAAFLVSFMPYHI) form a helical membrane-spanning segment. Over 267–291 (QRTIHLHLLHSETRPCDSVLRMQKS) the chain is Extracellular. A helical membrane pass occupies residues 292–312 (VVITLSLAASNCCFDPLLYFF). The Cytoplasmic portion of the chain corresponds to 313–352 (SGGNFRRRLSTFRKHSLSSMTYVPKKKASLPEKGEEICNE).

It belongs to the G-protein coupled receptor 1 family. Widely expressed, with higher expression in the lung and skin, intermediate levels in the heart, kidney and stomach and lower levels in several other tissues. Isoform 1 is the most abundant form in all tested tissues.

It is found in the cell membrane. In terms of biological role, receptor for cysteinyl leukotrienes mediating constriction of the microvascular smooth muscle during an inflammatory response. This response is mediated via a G-protein that activates a phosphatidylinositol-calcium second messenger system. The rank order of affinities for the leukotrienes is LTD4 &gt;&gt; LTE4 = LTC4 &gt;&gt; LTB4. The protein is Cysteinyl leukotriene receptor 1 (Cysltr1) of Mus musculus (Mouse).